We begin with the raw amino-acid sequence, 375 residues long: Tyrosine--tRNA ligase (375 aa).

L-tyrosine-binding residues include Y37, Y168, Q172, D175, and Q190. A 'KMSKS' region motif is present at residues 251–255; sequence KMSKS. K254 provides a ligand contact to ATP.

The protein belongs to the class-I aminoacyl-tRNA synthetase family. TyrS type 4 subfamily. Homodimer.

Its subcellular location is the cytoplasm. It carries out the reaction tRNA(Tyr) + L-tyrosine + ATP = L-tyrosyl-tRNA(Tyr) + AMP + diphosphate + H(+). In terms of biological role, catalyzes the attachment of tyrosine to tRNA(Tyr) in a two-step reaction: tyrosine is first activated by ATP to form Tyr-AMP and then transferred to the acceptor end of tRNA(Tyr). In Thermococcus kodakarensis (strain ATCC BAA-918 / JCM 12380 / KOD1) (Pyrococcus kodakaraensis (strain KOD1)), this protein is Tyrosine--tRNA ligase.